Reading from the N-terminus, the 421-residue chain is Magnesium transporter MRS2-5 (421 aa).

2 helical membrane passes run 357 to 377 (LLLT…AVFG) and 393 to 413 (YVLL…VLYF). Residues 377-379 (GMN) carry the Required for magnesium transport activity motif.

This sequence belongs to the CorA metal ion transporter (MIT) (TC 1.A.35.5) family. In terms of tissue distribution, expressed in the whole plant.

It localises to the membrane. Magnesium transporter that may mediate the influx of magnesium. The chain is Magnesium transporter MRS2-5 (MRS2-5) from Arabidopsis thaliana (Mouse-ear cress).